The primary structure comprises 450 residues: Trigger factor (450 aa).

The PPIase FKBP-type domain occupies glutamate 163–proline 249. A compositionally biased stretch (acidic residues) spans proline 431–aspartate 443. The tract at residues proline 431 to glutamine 450 is disordered.

It belongs to the FKBP-type PPIase family. Tig subfamily.

It localises to the cytoplasm. The enzyme catalyses [protein]-peptidylproline (omega=180) = [protein]-peptidylproline (omega=0). Its function is as follows. Involved in protein export. Acts as a chaperone by maintaining the newly synthesized protein in an open conformation. Functions as a peptidyl-prolyl cis-trans isomerase. The protein is Trigger factor of Desulforapulum autotrophicum (strain ATCC 43914 / DSM 3382 / VKM B-1955 / HRM2) (Desulfobacterium autotrophicum).